The chain runs to 820 residues: MKLPYSWLKELIPDLPPVADLEPTFAHLGLPLEGVEDVPAPVGGVLLVAVKAAEPMEGTQLTKLTLDTGENGEKTIASGAPNAVGLPAGTMVALVTPGTTLGGITYGVRPMQGVESWGMAASAKELGIGESNAGILTFPAGTAAPGTPLRELWPADSVLDVEVTPNRADVLSALGLARDLAAYLNLELKEPQIPAAPTQPGEIRVSLPDRGRVLDRDPQGKLRFGCDHFAARAVSGLQNGPAPLWMQRRVSLAGMRSIDLIVDTSNYVMLELGQPTALYDRRDVAGDGLVVAFGLREGETVKDLLGNTHQVGPEDLLILDAGMSDEPVMTVAEAFASAGQPKEGSHVLGIAGIMGGDHGHVRADTRDVVIESAHFDPVLLRRTSTRLGLKTDAVYRYERGVDPLLAPKAAVRVAELLRAAGGTPEAGQTVVGTPEVPQTITTTGEQIRALLGMHIGTAEMRESLTRLGCTVTGDGDSLTVTPPSWRVDMVIWQDLAEEVARLHGFTELPETLPTLRVHESNIGASAQSEARAELRRTLAGLGFQEVVTYTFTSDEEAQKARAEAPGVRLRNPMTTDRTGMRTALYPSLLRAAGAHPKGERALLFEIGRIFPAAGEQERLGLLMRGDLAARTYQDGVRGDFSVFKGLVQGFAGAVGASFALEQLRGDDVPAALHPGVAGAVVWNGERVGWLGALHPEIAQEFGLKGDTFLMEAALPLPGRDWAFRDPSRAPAAWRDLAVIAPQGVSYGDIVGVLKGAGGELLESVEPFDVFTGEQVGAGNRSVAVRLTYRGAKTLTDEEVDPVFNAQIDAVKARGWAIREK.

The tRNA-binding domain maps to 39 to 150; that stretch reads PAPVGGVLLV…GTAAPGTPLR (112 aa). The B5 domain maps to 435-510; sequence EVPQTITTTG…RLHGFTELPE (76 aa). Mg(2+) contacts are provided by D488, D494, E497, and E498. In terms of domain architecture, FDX-ACB spans 727 to 818; it reads SRAPAAWRDL…AVKARGWAIR (92 aa).

It belongs to the phenylalanyl-tRNA synthetase beta subunit family. Type 1 subfamily. As to quaternary structure, tetramer of two alpha and two beta subunits. It depends on Mg(2+) as a cofactor.

Its subcellular location is the cytoplasm. It catalyses the reaction tRNA(Phe) + L-phenylalanine + ATP = L-phenylalanyl-tRNA(Phe) + AMP + diphosphate + H(+). This Deinococcus radiodurans (strain ATCC 13939 / DSM 20539 / JCM 16871 / CCUG 27074 / LMG 4051 / NBRC 15346 / NCIMB 9279 / VKM B-1422 / R1) protein is Phenylalanine--tRNA ligase beta subunit (pheT).